The chain runs to 165 residues: Cyanate hydratase (165 aa).

Residues R106, E109, and S132 contribute to the active site.

The protein belongs to the cyanase family.

The catalysed reaction is cyanate + hydrogencarbonate + 3 H(+) = NH4(+) + 2 CO2. Its function is as follows. Catalyzes the reaction of cyanate with bicarbonate to produce ammonia and carbon dioxide. This is Cyanate hydratase from Laccaria bicolor (strain S238N-H82 / ATCC MYA-4686) (Bicoloured deceiver).